The chain runs to 131 residues: Large ribosomal subunit protein bL19 (131 aa).

This sequence belongs to the bacterial ribosomal protein bL19 family.

This protein is located at the 30S-50S ribosomal subunit interface and may play a role in the structure and function of the aminoacyl-tRNA binding site. This Synechococcus sp. (strain CC9902) protein is Large ribosomal subunit protein bL19.